Here is a 484-residue protein sequence, read N- to C-terminus: tRNA-2-methylthio-N(6)-dimethylallyladenosine synthase (484 aa).

In terms of domain architecture, MTTase N-terminal spans 29–149; it reads GVFHIHTLGC…LPKLLDQNRA (121 aa). [4Fe-4S] cluster contacts are provided by cysteine 38, cysteine 78, cysteine 112, cysteine 186, cysteine 190, and cysteine 193. One can recognise a Radical SAM core domain in the interval 172-401; it reads RASRISSWVA…VALQEQITEE (230 aa). Residues 404–474 form the TRAM domain; the sequence is ATFEGRDVEV…RHNLLADPDV (71 aa).

The protein belongs to the methylthiotransferase family. MiaB subfamily. Monomer. The cofactor is [4Fe-4S] cluster.

The protein resides in the cytoplasm. It carries out the reaction N(6)-dimethylallyladenosine(37) in tRNA + (sulfur carrier)-SH + AH2 + 2 S-adenosyl-L-methionine = 2-methylsulfanyl-N(6)-dimethylallyladenosine(37) in tRNA + (sulfur carrier)-H + 5'-deoxyadenosine + L-methionine + A + S-adenosyl-L-homocysteine + 2 H(+). Catalyzes the methylthiolation of N6-(dimethylallyl)adenosine (i(6)A), leading to the formation of 2-methylthio-N6-(dimethylallyl)adenosine (ms(2)i(6)A) at position 37 in tRNAs that read codons beginning with uridine. This chain is tRNA-2-methylthio-N(6)-dimethylallyladenosine synthase, found in Bifidobacterium longum (strain DJO10A).